A 374-amino-acid polypeptide reads, in one-letter code: Probable aminopeptidase YDR415C (374 aa).

The first 18 residues, 1–18 (MRIQSLFVLFNVAIIAWS), serve as a signal peptide directing secretion. Residues H177, D196, E235, D262, and H340 each contribute to the Zn(2+) site.

It belongs to the peptidase M28 family. M28E subfamily. The cofactor is Zn(2+).

The chain is Probable aminopeptidase YDR415C from Saccharomyces cerevisiae (strain ATCC 204508 / S288c) (Baker's yeast).